Consider the following 155-residue polypeptide: MAEGEITTFTALTERFGLPLGNYKKPKLLYCSNGGHFLRILPDGKVDGTRDRSDQHIQLQLSAEDVGEVYIKSTASGQYLAMDTNGLLYGSQLPGEECLFLERLEENHYNTYISKKHADKNWFVGLKKNGNSKLGPRTHYGQKAILFLPLPVSAD.

Residues 1–15 constitute a propeptide that is removed on maturation; the sequence is MAEGEITTFTALTER. N33 provides a ligand contact to heparin. A heparin-binding region spans residues 127–143; the sequence is KKNGNSKLGPRTHYGQK.

It belongs to the heparin-binding growth factors family.

Its subcellular location is the secreted. It localises to the cytoplasm. The protein resides in the cell cortex. It is found in the cytosol. The protein localises to the nucleus. Functionally, plays an important role in the regulation of cell survival, cell division, angiogenesis, cell differentiation and cell migration. Functions as a potent mitogen in vitro. Acts as a ligand for FGFR1 and integrins. Binds to FGFR1 in the presence of heparin leading to FGFR1 dimerization and activation via sequential autophosphorylation on tyrosine residues which act as docking sites for interacting proteins, leading to the activation of several signaling cascades. Binds to integrins. Its binding to integrins and subsequent ternary complex formation with integrins and FGFR1 are essential for FGF1 signaling. The sequence is that of Fibroblast growth factor 1 (FGF1) from Gallus gallus (Chicken).